The sequence spans 244 residues: Lactate utilization protein A (244 aa).

Belongs to the LutA/YkgE family.

In terms of biological role, is involved in L-lactate degradation and allows cells to grow with lactate as the sole carbon source. This Oceanobacillus iheyensis (strain DSM 14371 / CIP 107618 / JCM 11309 / KCTC 3954 / HTE831) protein is Lactate utilization protein A.